The following is a 127-amino-acid chain: Cyclin-dependent protein kinase inhibitor SIM (127 aa).

Residues 21–71 (RANTNRDDDGGGCTTPTSSDHKIPPTTATTPPPPPQKPRPPSTPSSLGIRS) form a disordered region. Pro residues predominate over residues 50-63 (TPPPPPQKPRPPST).

Interacts with CDKA-1. Interacts with CYCD2-1, CYCD3-2 and CYCD4-1. Interacts with CDKB1-1. Interacts with CPR5. Expressed in the shoot apical meristem, leaf primordia and the elongation zone of the root.

The protein localises to the nucleus. Functionally, cyclin-dependent protein kinase (CDK) inhibitor that functions as a repressor of mitosis in the endoreduplication cell cycle. Inhibits the kinase activity of CYCD3-1/CDKA-1, CYCD2-1/CDKA-1 and CYCB1-1/CDKB1-1 complexes in a dose dependent manner. Cooperates with SMR1 and SMR2 to promote endoreplication during leaf development. Required for normal trichome endoreplicating cell cycles. Positive regulator of effector-triggered immunity (ETI). The chain is Cyclin-dependent protein kinase inhibitor SIM from Arabidopsis thaliana (Mouse-ear cress).